The following is a 305-amino-acid chain: Acetyl-coenzyme A carboxylase carboxyl transferase subunit beta (305 aa).

The region spanning 23-292 is the CoA carboxyltransferase N-terminal domain; it reads GWLKCTHCNE…EENEPSPPPK (270 aa). The Zn(2+) site is built by Cys27, Cys30, Cys46, and Cys49. The segment at 27–49 adopts a C4-type zinc-finger fold; sequence CTHCNELIHANELEQNSNCCPKC. The tract at residues 281 to 305 is disordered; sequence FSEENEPSPPPKNLIKKTSPLKDKN.

It belongs to the AccD/PCCB family. In terms of assembly, acetyl-CoA carboxylase is a heterohexamer composed of biotin carboxyl carrier protein (AccB), biotin carboxylase (AccC) and two subunits each of ACCase subunit alpha (AccA) and ACCase subunit beta (AccD). The cofactor is Zn(2+).

The protein resides in the cytoplasm. It catalyses the reaction N(6)-carboxybiotinyl-L-lysyl-[protein] + acetyl-CoA = N(6)-biotinyl-L-lysyl-[protein] + malonyl-CoA. It participates in lipid metabolism; malonyl-CoA biosynthesis; malonyl-CoA from acetyl-CoA: step 1/1. In terms of biological role, component of the acetyl coenzyme A carboxylase (ACC) complex. Biotin carboxylase (BC) catalyzes the carboxylation of biotin on its carrier protein (BCCP) and then the CO(2) group is transferred by the transcarboxylase to acetyl-CoA to form malonyl-CoA. The sequence is that of Acetyl-coenzyme A carboxylase carboxyl transferase subunit beta from Protochlamydia amoebophila (strain UWE25).